The primary structure comprises 77 residues: Small ribosomal subunit protein uS17 (77 aa).

It belongs to the universal ribosomal protein uS17 family. Part of the 30S ribosomal subunit.

In terms of biological role, one of the primary rRNA binding proteins, it binds specifically to the 5'-end of 16S ribosomal RNA. In Rickettsia akari (strain Hartford), this protein is Small ribosomal subunit protein uS17.